A 248-amino-acid chain; its full sequence is Aspartate/glutamate leucyltransferase (248 aa).

It belongs to the R-transferase family. Bpt subfamily.

It is found in the cytoplasm. It catalyses the reaction N-terminal L-glutamyl-[protein] + L-leucyl-tRNA(Leu) = N-terminal L-leucyl-L-glutamyl-[protein] + tRNA(Leu) + H(+). The enzyme catalyses N-terminal L-aspartyl-[protein] + L-leucyl-tRNA(Leu) = N-terminal L-leucyl-L-aspartyl-[protein] + tRNA(Leu) + H(+). Its function is as follows. Functions in the N-end rule pathway of protein degradation where it conjugates Leu from its aminoacyl-tRNA to the N-termini of proteins containing an N-terminal aspartate or glutamate. In Methylobacterium sp. (strain 4-46), this protein is Aspartate/glutamate leucyltransferase.